The sequence spans 525 residues: MTHDIHAQRILILDFGSQYTQLIARRVREIGVFSEIRAWDMSDDEIRAYKPSGIILAGGPESTTEEEAPRAPEAVFALGVPVLGICYGMQTMAMQMGGWVESSAIREFGYAQIKAHGQSSLLQDIKDHVDQDGSALLDVWMSHGDKVTKMPEGFELMASTPSCPIAGMYNEAKKFYGVQFHPEVTHTLQGKRLFEHFVLQLCACEKLWTPANIVEDAIKKVREQVGTDKVLLGLSGGVDSSVVAALLHRAIGDQLTCVFVDNGLLRKNEGDQVMDMFAKNMGVRVIRADAEQLFLGKLAGVSDPEKKRKIIGGTFIDVFDTEATKLQEVKWLAQGTIYPDVIESAAAKTGKAHVIKSHHNVGGLPEDMAFKLVEPLRELFKDEVRAIGLELGLPYDMVYRHPFPGPGLGVRILGEVKKEYADILREADAIFLEELRAADWYHKTSQAFAVFLPVKSVGVVGDGRRYEWVISLRAVETVDFMTARWAHLPYELLEKVSNRIINEISGVSRVCYDVSSKPPATIEWE.

The 199-residue stretch at 9–207 (RILILDFGSQ…VLQLCACEKL (199 aa)) folds into the Glutamine amidotransferase type-1 domain. The active-site Nucleophile is C86. Residues H181 and E183 contribute to the active site. The GMPS ATP-PPase domain occupies 208-400 (WTPANIVEDA…LGLPYDMVYR (193 aa)). 235 to 241 (SGGVDSS) serves as a coordination point for ATP.

In terms of assembly, homodimer.

The enzyme catalyses XMP + L-glutamine + ATP + H2O = GMP + L-glutamate + AMP + diphosphate + 2 H(+). The protein operates within purine metabolism; GMP biosynthesis; GMP from XMP (L-Gln route): step 1/1. Its function is as follows. Catalyzes the synthesis of GMP from XMP. The protein is GMP synthase [glutamine-hydrolyzing] of Cellvibrio japonicus (strain Ueda107) (Pseudomonas fluorescens subsp. cellulosa).